A 233-amino-acid chain; its full sequence is Large ribosomal subunit protein uL1 (233 aa).

It belongs to the universal ribosomal protein uL1 family. As to quaternary structure, part of the 50S ribosomal subunit.

In terms of biological role, binds directly to 23S rRNA. The L1 stalk is quite mobile in the ribosome, and is involved in E site tRNA release. Protein L1 is also a translational repressor protein, it controls the translation of the L11 operon by binding to its mRNA. This is Large ribosomal subunit protein uL1 from Geotalea daltonii (strain DSM 22248 / JCM 15807 / FRC-32) (Geobacter daltonii).